The sequence spans 1191 residues: DNA-directed RNA polymerase subunit beta (1191 aa).

The segment covering 1171–1181 (RVKQEAEEKQA) has biased composition (basic and acidic residues). The disordered stretch occupies residues 1171–1191 (RVKQEAEEKQAEQVSEVVQED). Over residues 1182-1191 (EQVSEVVQED) the composition is skewed to low complexity.

It belongs to the RNA polymerase beta chain family. The RNAP catalytic core consists of 2 alpha, 1 beta, 1 beta' and 1 omega subunit. When a sigma factor is associated with the core the holoenzyme is formed, which can initiate transcription.

It carries out the reaction RNA(n) + a ribonucleoside 5'-triphosphate = RNA(n+1) + diphosphate. Its function is as follows. DNA-dependent RNA polymerase catalyzes the transcription of DNA into RNA using the four ribonucleoside triphosphates as substrates. This Streptococcus agalactiae serotype Ia (strain ATCC 27591 / A909 / CDC SS700) protein is DNA-directed RNA polymerase subunit beta.